The chain runs to 332 residues: 2,3-bisphosphoglycerate-dependent phosphoglycerate mutase 2 (332 aa).

The N-terminal 48 residues, 1–48 (MATSTTMSHQAIGSVVSQRPFKASQFLKEPLNNVPMKFRQKRFKIEAT), are a transit peptide targeting the chloroplast. Residues 85-92 (RHGESLWN), 98-99 (TG), Arg-135, 189-192 (ERMY), Lys-200, 216-217 (RR), and 260-261 (GN) contribute to the substrate site. The active-site Tele-phosphohistidine intermediate is the His-86. Glu-189 (proton donor/acceptor) is an active-site residue.

The protein belongs to the phosphoglycerate mutase family. BPG-dependent PGAM subfamily.

The protein resides in the plastid. Its subcellular location is the chloroplast. It carries out the reaction (2R)-2-phosphoglycerate = (2R)-3-phosphoglycerate. Its pathway is carbohydrate degradation; glycolysis; pyruvate from D-glyceraldehyde 3-phosphate: step 3/5. Functionally, catalyzes the interconversion of 2-phosphoglycerate and 3-phosphoglycerate. The protein is 2,3-bisphosphoglycerate-dependent phosphoglycerate mutase 2 of Arabidopsis thaliana (Mouse-ear cress).